The following is a 356-amino-acid chain: MIETDKLATEQRIIAATPASSHEEVFERALRPRQLDDYVGQEKVRGQLEIFIEAAKRRSEPLDHVLLFGPPGLGKTTLAHIIAREMGVNLRQTSGPVLERAGDLAALLTNLEANDVLFIDEIHRLSPVVEEILYPALEDYQIDIMIGEGPAARSVKLDLQPFTLVGATTRAGMLTNPLRDRFGIVARLEFYDAEQLSRIVRRSASLLNAQIDPNGALEIAKRSRGTPRIANRLLRRVRDFAEVKADGQITAAVADAALAMLDVDPVGFDLMDRKLLEAILYKFDGGPVGIDNLAAAIGEERDTIEDVLEPYLIQQGFLQRTPRGRVATLLTYRHFGLSVPDTGRTERGEWDTPDGK.

The interval 4–191 (TDKLATEQRI…FGIVARLEFY (188 aa)) is large ATPase domain (RuvB-L). Residues Leu-30, Arg-31, Gly-72, Lys-75, Thr-76, Thr-77, 138–140 (EDY), Arg-181, Tyr-191, and Arg-228 each bind ATP. Thr-76 provides a ligand contact to Mg(2+). The interval 192–262 (DAEQLSRIVR…VADAALAMLD (71 aa)) is small ATPAse domain (RuvB-S). A head domain (RuvB-H) region spans residues 265-356 (PVGFDLMDRK…RGEWDTPDGK (92 aa)). DNA-binding residues include Arg-301, Arg-320, and Arg-325.

The protein belongs to the RuvB family. In terms of assembly, homohexamer. Forms an RuvA(8)-RuvB(12)-Holliday junction (HJ) complex. HJ DNA is sandwiched between 2 RuvA tetramers; dsDNA enters through RuvA and exits via RuvB. An RuvB hexamer assembles on each DNA strand where it exits the tetramer. Each RuvB hexamer is contacted by two RuvA subunits (via domain III) on 2 adjacent RuvB subunits; this complex drives branch migration. In the full resolvosome a probable DNA-RuvA(4)-RuvB(12)-RuvC(2) complex forms which resolves the HJ.

The protein resides in the cytoplasm. The enzyme catalyses ATP + H2O = ADP + phosphate + H(+). The RuvA-RuvB-RuvC complex processes Holliday junction (HJ) DNA during genetic recombination and DNA repair, while the RuvA-RuvB complex plays an important role in the rescue of blocked DNA replication forks via replication fork reversal (RFR). RuvA specifically binds to HJ cruciform DNA, conferring on it an open structure. The RuvB hexamer acts as an ATP-dependent pump, pulling dsDNA into and through the RuvAB complex. RuvB forms 2 homohexamers on either side of HJ DNA bound by 1 or 2 RuvA tetramers; 4 subunits per hexamer contact DNA at a time. Coordinated motions by a converter formed by DNA-disengaged RuvB subunits stimulates ATP hydrolysis and nucleotide exchange. Immobilization of the converter enables RuvB to convert the ATP-contained energy into a lever motion, pulling 2 nucleotides of DNA out of the RuvA tetramer per ATP hydrolyzed, thus driving DNA branch migration. The RuvB motors rotate together with the DNA substrate, which together with the progressing nucleotide cycle form the mechanistic basis for DNA recombination by continuous HJ branch migration. Branch migration allows RuvC to scan DNA until it finds its consensus sequence, where it cleaves and resolves cruciform DNA. In Burkholderia lata (strain ATCC 17760 / DSM 23089 / LMG 22485 / NCIMB 9086 / R18194 / 383), this protein is Holliday junction branch migration complex subunit RuvB.